The sequence spans 429 residues: [LysW]-aminoadipate semialdehyde transaminase (429 aa).

Residues 112–113 (GT) and phenylalanine 139 each bind pyridoxal 5'-phosphate. Position 142 (arginine 142) interacts with substrate. 226-229 (DEIQ) provides a ligand contact to pyridoxal 5'-phosphate. An N6-(pyridoxal phosphate)lysine modification is found at lysine 255. Residue threonine 283 participates in substrate binding. Threonine 284 is a pyridoxal 5'-phosphate binding site. The segment at 408 to 429 (LRAQQSEMGQQQVSQGESVQTE) is disordered. Residues 411 to 429 (QQSEMGQQQVSQGESVQTE) are compositionally biased toward low complexity.

It belongs to the class-III pyridoxal-phosphate-dependent aminotransferase family. LysJ subfamily. As to quaternary structure, homodimer. Pyridoxal 5'-phosphate serves as cofactor.

The protein resides in the cytoplasm. It carries out the reaction [amino-group carrier protein]-C-terminal-gamma-(L-lysyl)-L-glutamate + 2-oxoglutarate = [amino-group carrier protein]-C-terminal-N-(1-carboxy-5-oxopentan-1-yl)-L-glutamine + L-glutamate. It participates in amino-acid biosynthesis; L-lysine biosynthesis via AAA pathway; L-lysine from L-alpha-aminoadipate (Thermus route): step 4/5. Functionally, catalyzes the transfer of the amino group of L-glutamate to [LysW]-aminoadipate 6-semialdehyde, generating [LysW]-gamma-L-lysine. This Deinococcus radiodurans (strain ATCC 13939 / DSM 20539 / JCM 16871 / CCUG 27074 / LMG 4051 / NBRC 15346 / NCIMB 9279 / VKM B-1422 / R1) protein is [LysW]-aminoadipate semialdehyde transaminase.